Consider the following 580-residue polypeptide: High affinity choline transporter 1 (580 aa).

Topologically, residues 1–6 are extracellular; sequence MPFHVE. Residues 7 to 27 form a helical membrane-spanning segment; that stretch reads GLVAIILFYLLIFLVGIWAAW. Residues 28 to 48 are Cytoplasmic-facing; that stretch reads KTKNSGNAEERSEAIIVGGRD. Residues 49–69 form a helical membrane-spanning segment; sequence IGLLVGGFTMTATWVGGGYIN. Residues 70–81 lie on the Extracellular side of the membrane; that stretch reads GTAEAVYGPGCG. The helical transmembrane segment at 82 to 102 threads the bilayer; sequence LAWAQAPIGYSLSLILGGLFF. At 103-125 the chain is on the cytoplasmic side; sequence AKPMRSKGYVTMLDPFQQIYGKR. The chain crosses the membrane as a helical span at residues 126 to 146; it reads MGGLLFIPALMGEMFWAAAIF. Over 147–164 the chain is Extracellular; that stretch reads SALGATISVIIDVDVNIS. A helical membrane pass occupies residues 165–185; that stretch reads VIVSALIAILYTLVGGLYSVA. At 186–191 the chain is on the cytoplasmic side; the sequence is YTDVVQ. A helical membrane pass occupies residues 192 to 212; that stretch reads LFCIFIGLWISVPFALSHPAV. At 213–237 the chain is on the extracellular side; it reads TDIGFTAVHAKYQSPWLGTIESVEV. A helical transmembrane segment spans residues 238-258; that stretch reads YTWLDNFLLLMLGGIPWQAYF. The Cytoplasmic portion of the chain corresponds to 259–274; the sequence is QRVLSSSSATYAQVLS. A helical transmembrane segment spans residues 275-295; that stretch reads FLAAFGCLVMALPAICIGAIG. At 296 to 317 the chain is on the extracellular side; sequence ASTDWNQTAYGFPDPKTKEEAD. N-linked (GlcNAc...) asparagine glycosylation occurs at Asn-301. The helical transmembrane segment at 318–338 threads the bilayer; that stretch reads MILPIVLQYLCPVYISFFGLG. At 339–376 the chain is on the cytoplasmic side; the sequence is AVSAAVMSSADSSILSASSMFARNIYQLSFRQNASDKE. Residues 377 to 397 traverse the membrane as a helical segment; the sequence is IVWVMRITVFVFGASATAMAL. Residues 398-406 lie on the Extracellular side of the membrane; sequence LTKTVYGLW. The helical transmembrane segment at 407-427 threads the bilayer; it reads YLSSDLVYIIIFPQLLCVLFI. Residues 428–435 are Cytoplasmic-facing; sequence KGTNTYGA. The helical transmembrane segment at 436-456 threads the bilayer; it reads VAGYIFGLFLRITGGEPYLYL. Topologically, residues 457-481 are extracellular; the sequence is QPLIFYPGYYPDKNGIYNQRFPFKT. The helical transmembrane segment at 482-502 threads the bilayer; sequence LSMVTSFFTNICVSYLAKYLF. The interval 502–580 is mediates interaction with SEC14L1; it reads FESGTLPPKL…EGSGTEDNLQ (79 aa). Over 503-580 the chain is Cytoplasmic; it reads ESGTLPPKLD…EGSGTEDNLQ (78 aa). Positions 527–532 match the Dileucine-like motif motif; it reads DKTILV.

This sequence belongs to the sodium:solute symporter (SSF) (TC 2.A.21) family. Homooligomerizes at cell surface. Interacts with SEC14L1; may regulate SLC5A7. Post-translationally, phosphorylated. As to expression, expressed in basal forebrain, brain stem, spinal chord, and striatum. Specific for cholinergic neurons.

Its subcellular location is the presynaptic cell membrane. It localises to the cell projection. The protein localises to the axon. The protein resides in the early endosome membrane. It is found in the cytoplasmic vesicle. Its subcellular location is the secretory vesicle. It localises to the synaptic vesicle membrane. It catalyses the reaction choline(out) + n Na(+)(out) = choline(in) + n Na(+)(in). Its activity is regulated as follows. Choline uptake activity is regulated by SLC5A7/CHT1 internalization (inactive form) from the cell surface and recycling of internalized SLC5A7/CHT1 into the cell surface (active form). Activated by extracellular chloride ion. Specifically inhibited by nanomolar concentrations of hemicholinium 3. Functionally, high-affinity Na(+)-coupled choline transmembrane symporter. Functions as an electrogenic, voltage-dependent transporter with variable charge/choline stoichiometry. Choline uptake and choline-induced current is also Cl(-)-dependent where Cl(-) is likely a regulatory ion rather than cotransported ion. Plays a critical role in acetylcholine (ACh) synthesis by taking up the substrate choline from the synaptic cleft into the presynaptic nerve terminals after neurotransmitter release. SLC5A7/CHT1-mediated choline high-affinity transport in cholinergic neurons is the rate-limiting step for production of ACh, thereby facilitating communication by subsequent action potentials. Localized predominantly in presynaptic terminal intracellular organelles, and translocated to the plasma membrane in active form in response to neuronal activity. This is High affinity choline transporter 1 from Rattus norvegicus (Rat).